We begin with the raw amino-acid sequence, 715 residues long: Palmitoyltransferase ZDHHC5 (715 aa).

The Cytoplasmic portion of the chain corresponds to 1–13 (MPAESGKRFKPSK). A helical transmembrane segment spans residues 14–34 (YVPVSAAAIFLVGATTLFFAF). Residues 35-52 (TCPGLSLDVSPAVPIYNA) lie on the Extracellular side of the membrane. Residues 53 to 73 (IMFLFVLANFSMATFMDPGIF) form a helical membrane-spanning segment. Residues 74–148 (PRAEEDEDKE…NCIGRRNYRY (75 aa)) are Cytoplasmic-facing. At Y91 the chain carries Phosphotyrosine. The 51-residue stretch at 104–154 (KWCATCRFYRPPRCSHCSVCDNCVEEFDHHCPWVNNCIGRRNYRYFFLFLL) folds into the DHHC domain. The active-site S-palmitoyl cysteine intermediate is C134. Residues 149–169 (FFLFLLSLTAHIMGVFGFGLL) traverse the membrane as a helical segment. Over 170 to 191 (YVLCHIEELSGVRTAVTMAVMC) the chain is Extracellular. Residues 192 to 212 (VAGLFFIPVAGLTGFHVVLVA) form a helical membrane-spanning segment. The Cytoplasmic portion of the chain corresponds to 213–715 (RGRTTNEQVT…VGGTTYEISV (503 aa)). S247 is subject to Phosphoserine. The interval 289 to 715 (GELRRTKSKG…VGGTTYEISV (427 aa)) is disordered. T294 bears the Phosphothreonine mark. Phosphoserine is present on residues S296 and S299. Residue T303 is modified to Phosphothreonine. S345 carries the post-translational modification Phosphoserine. 2 positions are modified to phosphothreonine: T348 and T350. The segment covering 359 to 373 (SSSSTSAAMPHSSSA) has biased composition (low complexity). Phosphoserine occurs at positions 380, 398, 406, and 409. T411 is subject to Phosphothreonine. S415, S425, S429, and S432 each carry phosphoserine. Residues 422–432 (SSGSRSSSLKS) show a composition bias toward low complexity. T436 bears the Phosphothreonine mark. Positions 442–478 (QLQSIRSEGTTSTSYKSLANQTRNGSLSYDSLLTPSD) are enriched in polar residues. Phosphoserine occurs at positions 529 and 554. The span at 581–597 (PRTSSSSDDSKRSPLSK) shows a compositional bias: low complexity. R617 carries the post-translational modification Omega-N-methylarginine. Phosphoserine is present on S621. The residue at position 659 (T659) is a Phosphothreonine. Polar residues predominate over residues 666–677 (LKTTYSKSNGQP). A phosphoserine mark is found at S684 and S694. Position 697 is an omega-N-methylarginine (R697).

This sequence belongs to the DHHC palmitoyltransferase family. ERF2/ZDHHC9 subfamily. Autopalmitoylated. Palmitoylation of the C-terminal tail regulates stimulation-dependent plasma membrane motility. Post-translationally, phosphorylation regulates association with endocytic proteins and its subcellular localization. Phosphorylation by LYN during fatty acid uptake leads to inactivation of the activity.

It localises to the cell membrane. It carries out the reaction L-cysteinyl-[protein] + hexadecanoyl-CoA = S-hexadecanoyl-L-cysteinyl-[protein] + CoA. Palmitoyltransferase that catalyzes the addition of palmitate onto various protein substrates such as CTNND2, CD36, GSDMD, NLRP3, NOD1, NOD2, STAT3 and S1PR1 thus plays a role in various biological processes including cell adhesion, inflammation, fatty acid uptake, bacterial sensing or cardiac functions. Plays an important role in the regulation of synapse efficacy by mediating palmitoylation of delta-catenin/CTNND2, thereby increasing synaptic delivery and surface stabilization of alpha-amino-3-hydroxy-5-methyl-4-isoxazole propionic acid receptors (AMPARs). Under basal conditions, remains at the synaptic membrane through FYN-mediated phosphorylation that prevents association with endocytic proteins. Neuronal activity enhances the internalization and trafficking of DHHC5 from spines to dendritic shafts where it palmitoylates delta-catenin/CTNND2. Regulates cell adhesion at the plasma membrane by palmitoylating GOLGA7B and DSG2. Plays a role in innate immune response by mediating the palmitoylation of NOD1 and NOD2 and their proper recruitment to the bacterial entry site and phagosomes. Also participates in fatty acid uptake by palmitoylating CD36 and thereby targeting it to the plasma membrane. Upon binding of fatty acids to CD36, gets phosphorylated by LYN leading to inactivation and subsequent CD36 caveolar endocytosis. Controls oligodendrocyte development by catalyzing STAT3 palmitoylation. Acts as a regulator of inflammatory response by mediating palmitoylation of NLRP3 and GSDMD. Palmitoylates NLRP3 to promote inflammasome assembly and activation. Activates pyroptosis by catalyzing palmitoylation of gasdermin-D (GSDMD), thereby promoting membrane translocation and pore formation of GSDMD. The sequence is that of Palmitoyltransferase ZDHHC5 (Zdhhc5) from Rattus norvegicus (Rat).